The following is a 229-amino-acid chain: PHO85 cyclin-5 (229 aa).

Positions M1–S24 are enriched in basic and acidic residues. The tract at residues M1–Y46 is disordered.

It belongs to the cyclin family. PCL1,2 subfamily. As to quaternary structure, forms a cyclin-CDK complex with PHO85.

Functionally, cyclin partner of the cyclin-dependent kinase (CDK) PHO85. Positively controls degradation of transcription factor GCN4 under favorable growth conditions. The PCL5-PHO85 cyclin-CDK holoenzyme phosphorylates GCN4, which is required for its degradation by the E3 ubiquitin ligase complex SCF(Cdc4). Amino acid starvation reduces PCL5-PHO85-associated GCN4 kinase activity and leads to stabilization of GCN4. This chain is PHO85 cyclin-5 (PCL5), found in Saccharomyces cerevisiae (strain ATCC 204508 / S288c) (Baker's yeast).